A 491-amino-acid polypeptide reads, in one-letter code: Lysine--tRNA ligase (491 aa).

Mg(2+) is bound by residues Glu400 and Glu407.

It belongs to the class-II aminoacyl-tRNA synthetase family. Homodimer. Mg(2+) is required as a cofactor.

It localises to the cytoplasm. The enzyme catalyses tRNA(Lys) + L-lysine + ATP = L-lysyl-tRNA(Lys) + AMP + diphosphate. This is Lysine--tRNA ligase from Mesomycoplasma hyopneumoniae (strain 7448) (Mycoplasma hyopneumoniae).